A 426-amino-acid polypeptide reads, in one-letter code: Maintenance of mitochondrial morphology protein 1 (426 aa).

Residues Met1 to Gly100 are Lumenal-facing. A helical transmembrane segment spans residues Phe101–Phe121. At Ser122–Leu426 the chain is on the cytoplasmic side. The SMP-LTD domain occupies Pro194–Pro409.

Belongs to the MMM1 family. Homodimer. Component of the ER-mitochondria encounter structure (ERMES) or MDM complex, composed of MMM1, MDM10, MDM12 and MDM34. An MMM1 homodimer associates with one molecule of MDM12 on each side in a pairwise head-to-tail manner, and the SMP-LTD domains of MMM1 and MDM12 generate a continuous hydrophobic tunnel for phospholipid trafficking.

It is found in the endoplasmic reticulum membrane. Its function is as follows. Component of the ERMES/MDM complex, which serves as a molecular tether to connect the endoplasmic reticulum (ER) and mitochondria. Components of this complex are involved in the control of mitochondrial shape and protein biogenesis, and function in nonvesicular lipid trafficking between the ER and mitochondria. The MDM12-MMM1 subcomplex functions in the major beta-barrel assembly pathway that is responsible for biogenesis of all outer membrane beta-barrel proteins, and acts in a late step after the SAM complex. The MDM10-MDM12-MMM1 subcomplex further acts in the TOM40-specific pathway after the action of the MDM12-MMM1 complex. Essential for establishing and maintaining the structure of mitochondria and maintenance of mtDNA nucleoids. The sequence is that of Maintenance of mitochondrial morphology protein 1 from Saccharomyces cerevisiae (strain AWRI1631) (Baker's yeast).